Consider the following 347-residue polypeptide: Cytosolic sulfotransferase 14 (347 aa).

Lysine 87–tryptophan 92 lines the 3'-phosphoadenylyl sulfate pocket. Histidine 155 serves as the catalytic Proton acceptor. 3'-phosphoadenylyl sulfate-binding positions include arginine 177, serine 185, tyrosine 244, and arginine 310–glycine 312.

It belongs to the sulfotransferase 1 family.

The protein resides in the cytoplasm. Functionally, sulfotransferase that utilizes 3'-phospho-5'-adenylyl sulfate (PAPS) as sulfonate donor. Not active with 11-hydroxyjasmonate or 12-hydroxyjasmonate. This is Cytosolic sulfotransferase 14 (SOT14) from Arabidopsis thaliana (Mouse-ear cress).